The chain runs to 439 residues: Probable eukaryotic translation initiation factor 5-1 (439 aa).

Residue 29–36 (GRGNGIKT) coordinates GTP. The disordered stretch occupies residues 143–245 (LKNPPEQKKS…REAAEKRMKE (103 aa)). Residues 147 to 186 (PEQKKSSKDKKSMRRAEKERLREGEAADEEMRKLKKEAAS) are compositionally biased toward basic and acidic residues. The span at 214–228 (DENDQADSEEDDDDV) shows a compositional bias: acidic residues. At Thr232 the chain carries Phosphothreonine. Over residues 234–245 (TSREAAEKRMKE) the composition is skewed to basic and acidic residues. In terms of domain architecture, W2 spans 283-439 (KIPENAHEKL…QNAESESEEE (157 aa)). Phosphoserine is present on residues Ser434 and Ser436.

The protein belongs to the eIF-2-beta/eIF-5 family.

Its function is as follows. Catalyzes the hydrolysis of GTP bound to the 40S ribosomal initiation complex (40S.mRNA.Met-tRNA[F].eIF-2.GTP) with the subsequent joining of a 60S ribosomal subunit resulting in the release of eIF-2 and the guanine nucleotide. The subsequent joining of a 60S ribosomal subunit results in the formation of a functional 80S initiation complex (80S.mRNA.Met-tRNA[F]). The polypeptide is Probable eukaryotic translation initiation factor 5-1 (Arabidopsis thaliana (Mouse-ear cress)).